A 381-amino-acid polypeptide reads, in one-letter code: Succinyl-diaminopimelate desuccinylase (381 aa).

His-69 contacts Zn(2+). The active site involves Asp-71. Asp-103 is a Zn(2+) binding site. The Proton acceptor role is filled by Glu-137. The Zn(2+) site is built by Glu-138, Glu-166, and His-355.

Belongs to the peptidase M20A family. DapE subfamily. In terms of assembly, homodimer. The cofactor is Zn(2+). It depends on Co(2+) as a cofactor.

The catalysed reaction is N-succinyl-(2S,6S)-2,6-diaminopimelate + H2O = (2S,6S)-2,6-diaminopimelate + succinate. The protein operates within amino-acid biosynthesis; L-lysine biosynthesis via DAP pathway; LL-2,6-diaminopimelate from (S)-tetrahydrodipicolinate (succinylase route): step 3/3. Functionally, catalyzes the hydrolysis of N-succinyl-L,L-diaminopimelic acid (SDAP), forming succinate and LL-2,6-diaminopimelate (DAP), an intermediate involved in the bacterial biosynthesis of lysine and meso-diaminopimelic acid, an essential component of bacterial cell walls. This is Succinyl-diaminopimelate desuccinylase from Rickettsia africae (strain ESF-5).